Consider the following 215-residue polypeptide: Pyridoxine/pyridoxamine 5'-phosphate oxidase (215 aa).

Substrate is bound by residues 8 to 11 (RQEY) and K66. Residues 61-66 (RIVLLK), 76-77 (YT), R82, K83, and Q105 each bind FMN. The substrate site is built by Y123 and R127. Residues 140–141 (QS) and W186 each bind FMN. A substrate-binding site is contributed by 192–194 (RLH). Position 196 (R196) interacts with FMN.

The protein belongs to the pyridoxamine 5'-phosphate oxidase family. Homodimer. The cofactor is FMN.

The enzyme catalyses pyridoxamine 5'-phosphate + O2 + H2O = pyridoxal 5'-phosphate + H2O2 + NH4(+). It catalyses the reaction pyridoxine 5'-phosphate + O2 = pyridoxal 5'-phosphate + H2O2. It functions in the pathway cofactor metabolism; pyridoxal 5'-phosphate salvage; pyridoxal 5'-phosphate from pyridoxamine 5'-phosphate: step 1/1. The protein operates within cofactor metabolism; pyridoxal 5'-phosphate salvage; pyridoxal 5'-phosphate from pyridoxine 5'-phosphate: step 1/1. Functionally, catalyzes the oxidation of either pyridoxine 5'-phosphate (PNP) or pyridoxamine 5'-phosphate (PMP) into pyridoxal 5'-phosphate (PLP). The polypeptide is Pyridoxine/pyridoxamine 5'-phosphate oxidase (Salinibacter ruber (strain DSM 13855 / M31)).